The chain runs to 318 residues: Zinc chaperone YjiA (318 aa).

Residue 11-19 (GFLGAGKTT) coordinates GTP. Zn(2+)-binding residues include Glu-37, Glu-42, Cys-66, Glu-74, and His-114. The CXCC motif motif lies at 64-67 (CICC). Asp-161 lines the GTP pocket. Residues Glu-167, His-170, and His-187 each contribute to the Zn(2+) site. Residues 224–315 (ISSIVVELDY…EEEIRAAFAG (92 aa)) form the CobW C-terminal domain.

This sequence belongs to the SIMIBI class G3E GTPase family. ZNG1 subfamily. As to quaternary structure, monomer in the apo form. Metal binding induces oligomerization. Forms homodimers and higher oligomers.

It catalyses the reaction GTP + H2O = GDP + phosphate + H(+). With respect to regulation, GTPase activity is inhibited by metal binding. Activity is decreased in the presence of Co(II) or Ni(II), and is completely inhibited in the presence of Zn(II). Functionally, zinc chaperone that directly transfers zinc cofactor to target proteins, thereby activating them. Zinc is transferred from the CXCC motif in the GTPase domain to the zinc binding site in target proteins in a process requiring GTP hydrolysis. This is Zinc chaperone YjiA (yjiA) from Escherichia coli (strain K12).